The sequence spans 515 residues: MSSYKPLAIPTYPKLGEKITQDTLYWKRYKTPVQIKEFGAVTKIHFSPIQPFSYAVTSSTRIHLYGQYSQEPVKTFSRFKDTAYCGTYRGDGKLLAAGCEDSVVQLFDISGKAALRQFSGHSKAVHFVDFTSDKYRIVSGSDDYTSKLWDIPNGIEIASYKEHTDYIRCGCTSSLNNDLFATGSYDHTIKVFDGRTDKSVMSMDHGQPVESVLLFPSGGLLVSAGGRYVKVWDILKGGQLLVSLRNHHKTVTCLCLSSSGQRLLSGSLDRHVKVYSTMNYKVVHSFDYAASILSLALAPDDQMIVVGMTNGVLNIKHRKPEERKPLQSTTKRHPRYRVFVRGKDYMPKQDDIYVSKPVREHLKKYDQLLKGFHMSKALDAVLQSQIRTKKPEVTVAVMNELKRRGTLKNALAGRNEKELSDLLIFLLKHLVNPLFLPILLNVAEHIIDIYSPVVGQSSVIHKQFIRLQEVVEKEINYQEELLKILGMMDTLFATMTTKKESPWEEPKPILPLGSQ.

WD repeat units lie at residues 36-75, 78-117, 120-159, 162-202, 204-242, 246-285, and 287-326; these read KEFG…PVKT, RFKD…ALRQ, GHSK…EIAS, EHTD…SVMS, DHGQ…QLLV, NHHK…VVHS, and DYAA…RKPL.

Part of the small subunit (SSU) processome, composed of more than 70 proteins and the RNA chaperone small nucleolar RNA (snoRNA) U3. May be a component of the proposed t-UTP subcomplex of the ribosomal small subunit (SSU) processome.

Its subcellular location is the nucleus. It is found in the nucleolus. Its function is as follows. Ribosome biogenesis factor. Involved in nucleolar processing of pre-18S ribosomal RNA. Required for optimal pre-ribosomal RNA transcription by RNA polymerase I. Part of the small subunit (SSU) processome, first precursor of the small eukaryotic ribosomal subunit. During the assembly of the SSU processome in the nucleolus, many ribosome biogenesis factors, an RNA chaperone and ribosomal proteins associate with the nascent pre-rRNA and work in concert to generate RNA folding, modifications, rearrangements and cleavage as well as targeted degradation of pre-ribosomal RNA by the RNA exosome. This is U3 small nucleolar RNA-associated protein 15 homolog (utp15) from Xenopus laevis (African clawed frog).